The following is a 740-amino-acid chain: Elongation factor 2 (740 aa).

In terms of domain architecture, tr-type G spans 23–264 (AQIRNAGTLA…MIIEHVPPPN (242 aa)). GTP contacts are provided by residues 32-39 (AHVDHGKT), 98-102 (DTPGH), and 152-155 (NKID). Histidine 605 carries the post-translational modification Diphthamide.

Belongs to the TRAFAC class translation factor GTPase superfamily. Classic translation factor GTPase family. EF-G/EF-2 subfamily.

It is found in the cytoplasm. Catalyzes the GTP-dependent ribosomal translocation step during translation elongation. During this step, the ribosome changes from the pre-translocational (PRE) to the post-translocational (POST) state as the newly formed A-site-bound peptidyl-tRNA and P-site-bound deacylated tRNA move to the P and E sites, respectively. Catalyzes the coordinated movement of the two tRNA molecules, the mRNA and conformational changes in the ribosome. This chain is Elongation factor 2, found in Pyrobaculum arsenaticum (strain DSM 13514 / JCM 11321 / PZ6).